We begin with the raw amino-acid sequence, 37 residues long: Small ribosomal subunit protein uS19 (37 aa).

Belongs to the universal ribosomal protein uS19 family.

In Helix lucorum (Snail), this protein is Small ribosomal subunit protein uS19 (RPS15).